Reading from the N-terminus, the 548-residue chain is Mercuric reductase (548 aa).

The HMA domain occupies 1–65; the sequence is MTEITVNGMT…AIAALGYQGS (65 aa). C11 and C14 together coordinate a metal cation. The FAD site is built by A97, G117, and T122. C123 and C128 form a disulfide bridge. Residues K132, A198, D390, and V398 each coordinate FAD. Hg(2+) is bound by residues C545 and C546.

Belongs to the class-I pyridine nucleotide-disulfide oxidoreductase family. In terms of assembly, homodimer. The cofactor is FAD.

It catalyses the reaction Hg + NADP(+) + H(+) = Hg(2+) + NADPH. In terms of biological role, resistance to Hg(2+) in bacteria appears to be governed by a specialized system which includes mercuric reductase. MerA protein is responsible for volatilizing mercury as Hg(0). This chain is Mercuric reductase (merA), found in Pseudomonas fluorescens.